A 512-amino-acid chain; its full sequence is Krueppel-like factor 11 (512 aa).

Residues 109–128 (PQSPDLVEPSTRTPVSPQVT) are disordered. Over residues 118-128 (STRTPVSPQVT) the composition is skewed to polar residues. Position 124 is a phosphoserine (S124). 3 C2H2-type zinc fingers span residues 394-418 (YVCS…LRTH), 424-448 (FNCS…RRTH), and 454-476 (FVCP…ARRH).

It belongs to the Sp1 C2H2-type zinc-finger protein family. Interacts with SIN3A. As to expression, ubiquitous. Higher expression in erythroid cells.

Its subcellular location is the nucleus. Its function is as follows. Transcription factor. Activates the epsilon- and gamma-globin gene promoters and, to a much lower degree, the beta-globin gene and represses promoters containing SP1-like binding inhibiting cell growth. Represses transcription of SMAD7 which enhances TGF-beta signaling. Induces apoptosis. The polypeptide is Krueppel-like factor 11 (KLF11) (Homo sapiens (Human)).